The primary structure comprises 1215 residues: Metabotropic glycine receptor (1215 aa).

The first 23 residues, 1 to 23 (MGAMAYPLLLCLLLAQLGLGAVG), serve as a signal peptide directing secretion. Positions 23 to 66 (GASRDPQGRPDSPRERTPKGKPHAQQPGRASASDSSAPWSRSTD) are disordered. Topologically, residues 24–417 (ASRDPQGRPD…CFVQEDKYLR (394 aa)) are extracellular. The span at 28–40 (PQGRPDSPRERTP) shows a compositional bias: basic and acidic residues. The span at 52 to 64 (ASASDSSAPWSRS) shows a compositional bias: low complexity. Positions 85-281 (YLYTGDSHQL…CENGSYKPGW (197 aa)) are cache-like region. Residues Asn98 and Asn143 are each glycosylated (N-linked (GlcNAc...) asparagine). The cysteines at positions 99 and 272 are disulfide-linked. 2 residues coordinate glycine: Ser172 and Arg173. A glycan (N-linked (GlcNAc...) asparagine) is linked at Asn215. Glu271 is a binding site for glycine. A glycan (N-linked (GlcNAc...) asparagine) is linked at Asn274. Asp307 contacts glycine. Asn333 carries N-linked (GlcNAc...) asparagine glycosylation. A helical transmembrane segment spans residues 418-439 (LAIISFQALCMLLDFVSMLVVY). At 440-451 (HFRKAKSIRASG) the chain is on the cytoplasmic side. A helical membrane pass occupies residues 452-474 (LILLETILFGSLLLYFPVVILYF). At 475 to 478 (EPST) the chain is on the extracellular side. The chain crosses the membrane as a helical span at residues 479-501 (FRCILLRWARLLGFATVYGTVTL). Cys481 and Cys573 form a disulfide bridge. The Cytoplasmic segment spans residues 502-525 (KLHRVLKVFLSRTAQRIPYMTGGR). A helical membrane pass occupies residues 526 to 547 (VMRMLAVILLVVFWFLIGWTSS). At 548–576 (VCQNLEKQISLIGQGKTSDHLIFNMCLID) the chain is on the extracellular side. Residues 577 to 597 (RWDYMTAVAEFLFLLWGVYLC) traverse the membrane as a helical segment. Over 598–611 (YAVRTVPSAFHEPR) the chain is Cytoplasmic. A helical membrane pass occupies residues 612 to 633 (YMAVAVHNELIISAIFHTIRFV). The Extracellular segment spans residues 634-642 (LASRLQSDW). A helical membrane pass occupies residues 643–664 (MLMLYFAHTHLTVTVTIGLLLI). Residues 665–1215 (PKFSHSSNNP…KEEIWDSFKV (551 aa)) lie on the Cytoplasmic side of the membrane. Ser694, Ser705, and Ser708 each carry phosphoserine. Positions 757–999 (RITEIPETVS…LNPGTTQMKD (243 aa)) are disordered. Basic and acidic residues-rich tracts occupy residues 769–781 (CSKEDKEGADHGT) and 819–828 (STYDHVRDQT). Lys774 is covalently cross-linked (Glycyl lysine isopeptide (Lys-Gly) (interchain with G-Cter in ubiquitin)). Ser865 is subject to Phosphoserine. Positions 925 to 943 (VEERTKSQKPLPKDKETNR) are enriched in basic and acidic residues. At Ser946 the chain carries Phosphoserine. The segment covering 979–998 (QRVNPTTANSDLNPGTTQMK) has biased composition (polar residues). 2 short sequence motifs (VCPWE motif) span residues 1006 to 1010 (VCPWE) and 1071 to 1075 (VCLWE). Phosphoserine is present on Ser1080. Positions 1117–1164 (SEELPPKAVASKTENENLNQIGHQEKKTSSSEENVRGSYNSSNNFQQP) are disordered. Over residues 1139-1151 (HQEKKTSSSEENV) the composition is skewed to basic and acidic residues. Positions 1153–1164 (GSYNSSNNFQQP) are enriched in polar residues. A VCPWE motif 3 motif is present at residues 1171-1175 (VCPWE).

This sequence belongs to the G-protein coupled receptor 3 family. As to quaternary structure, homodimer. Associates with the RGS7-GNB5 complex, promoting its localization to the cell membrane and regulating its GTPase activator activity. Interacts (via VCPWE motifs) with GNAO1. Interacts with GPC4. Interacts with EGFLAM.

It localises to the cell membrane. Its subcellular location is the postsynaptic cell membrane. It is found in the presynaptic cell membrane. The protein localises to the nucleus. In terms of biological role, metabotropic receptor for glycine that controls synapse formation and function in the brain. Acts as an atypical G-protein coupled receptor that recruits and regulates the RGS7-GNB5 complex instead of activating G proteins. In absence of glycine ligand, promotes the GTPase activator activity of RGS7, increasing the GTPase activity of G protein alpha subunits, thereby driving them into their inactive GDP-bound form. Glycine-binding changes the conformation of the intracellular surface, inhibiting the GTPase activator activity of the RGS7-GNB5 complex, promoting G protein alpha subunits into their active GTP-bound form and regulating cAMP levels. Also able to bind taurine, a compound closely related to glycine, but with a two-fold lower affinity. Glycine receptor-dependent regulation of cAMP controls key ion channels, kinases and neurotrophic factors involved in neuronal excitability and synaptic transmission. Plays a pivotal role in regulating mood and cognition via its ability to regulate neuronal excitability in L2/L3 pyramidal neurons of the prefrontal cortex. Also involved in spatial learning by regulating hippocampal CA1 neuronal excitability. Acts as a synaptic organizer in the hippocampus, required for proper mossy fiber-CA3 neurocircuitry establishment, structure and function: induces presynaptic differentiation in contacting axons via its interaction with GPC4. In addition to glycine, may also act as a receptor for osteocalcin (BGLAP) hormone: osteocalcin-binding initiates a signaling response that prevents neuronal apoptosis in the hippocampus and regulates the synthesis of neurotransmitters. This chain is Metabotropic glycine receptor, found in Homo sapiens (Human).